The primary structure comprises 341 residues: Glyceraldehyde-3-phosphate dehydrogenase 2 (341 aa).

NAD(+) contacts are provided by residues 12-13, R78, and T120; that span reads RI. D-glyceraldehyde 3-phosphate-binding positions include 152 to 154 and T183; that span reads SCT. C153 acts as the Nucleophile in catalysis. N184 is a binding site for NAD(+). D-glyceraldehyde 3-phosphate contacts are provided by residues R198, 211–212, and R234; that span reads TG. N313 lines the NAD(+) pocket.

The protein belongs to the glyceraldehyde-3-phosphate dehydrogenase family. As to quaternary structure, homotetramer.

Its subcellular location is the cytoplasm. The enzyme catalyses D-glyceraldehyde 3-phosphate + phosphate + NAD(+) = (2R)-3-phospho-glyceroyl phosphate + NADH + H(+). The protein operates within carbohydrate degradation; glycolysis; pyruvate from D-glyceraldehyde 3-phosphate: step 1/5. In terms of biological role, catalyzes the oxidative phosphorylation of glyceraldehyde 3-phosphate (G3P) to 1,3-bisphosphoglycerate (BPG) using the cofactor NAD. The first reaction step involves the formation of a hemiacetal intermediate between G3P and a cysteine residue, and this hemiacetal intermediate is then oxidized to a thioester, with concomitant reduction of NAD to NADH. The reduced NADH is then exchanged with the second NAD, and the thioester is attacked by a nucleophilic inorganic phosphate to produce BPG. The sequence is that of Glyceraldehyde-3-phosphate dehydrogenase 2 (gapA2) from Staphylococcus epidermidis (strain ATCC 35984 / DSM 28319 / BCRC 17069 / CCUG 31568 / BM 3577 / RP62A).